Here is a 136-residue protein sequence, read N- to C-terminus: Small ribosomal subunit protein uS19 (136 aa).

The disordered stretch occupies residues 117-136 (VQHGDPGMGATRSSMFVPLK).

The protein belongs to the universal ribosomal protein uS19 family.

Functionally, protein S19 forms a complex with S13 that binds strongly to the 16S ribosomal RNA. The polypeptide is Small ribosomal subunit protein uS19 (Methanobrevibacter smithii (strain ATCC 35061 / DSM 861 / OCM 144 / PS)).